Consider the following 100-residue polypeptide: NADH-quinone oxidoreductase subunit K (100 aa).

A run of 3 helical transmembrane segments spans residues 4–24, 29–49, and 60–80; these read LNYGFTISIILFFIGIISLLI, IFILVSLEVLINSIILGFILI, and VLYIFIVTIATVEVSVMLAIF.

Belongs to the complex I subunit 4L family. NDH-1 is composed of 13 different subunits. Subunits NuoA, H, J, K, L, M, N constitute the membrane sector of the complex.

It is found in the cell membrane. It carries out the reaction a quinone + NADH + 5 H(+)(in) = a quinol + NAD(+) + 4 H(+)(out). Functionally, NDH-1 shuttles electrons from NADH, via FMN and iron-sulfur (Fe-S) centers, to quinones in the respiratory chain. The immediate electron acceptor for the enzyme in this species is believed to be ubiquinone. Couples the redox reaction to proton translocation (for every two electrons transferred, four hydrogen ions are translocated across the cytoplasmic membrane), and thus conserves the redox energy in a proton gradient. In Buchnera aphidicola subsp. Cinara cedri (strain Cc), this protein is NADH-quinone oxidoreductase subunit K.